We begin with the raw amino-acid sequence, 448 residues long: Beclin-1 (448 aa).

Met1 carries the post-translational modification N-acetylmethionine. A phosphoserine mark is found at Ser14 and Ser29. Residues 47–72 are disordered; that stretch reads TTAQAKPGESQEEEANSGEEPFIETR. 3 positions are modified to phosphoserine; by AMPK: Ser88, Ser91, and Ser94. The BH3 motif lies at 106 to 125; that stretch reads TMENLSRRLKVTGDLFDIMS. The interval 110 to 157 is interaction with BCL2 and BCL2L1 isoform Bcl-X(L); it reads LSRRLKVTGDLFDIMSGQTDVDHPLCEECTDTLLDQLDTQLNVTENEC. At Thr117 the chain carries Phosphothreonine; by DAPK1. Positions 140 to 267 form a coiled coil; it reads DTLLDQLDTQ…QLDKLKKTNV (128 aa). The tract at residues 243–448 is evolutionary conserved domain (ECD); that stretch reads DELKSVENQM…AWVSSQFYNK (206 aa). Residues Lys400 and Lys435 each participate in a glycyl lysine isopeptide (Lys-Gly) (interchain with G-Cter in ubiquitin) cross-link. The interval 423 to 448 is required for membrane-association; that stretch reads WTKALKFMLTNLKWGLAWVSSQFYNK.

This sequence belongs to the beclin family. In terms of assembly, a homodimeric form is proposed to exist; this metastable form readily transits to ATG14- or UVRAG-containing complexes with BECN1:UVRAG being more stable than BECN1:ATG14. Component of the PI3K (PI3KC3/PI3K-III/class III phosphatidylinositol 3-kinase) complex the core of which is composed of the catalytic subunit PIK3C3, the regulatory subunit PIK3R4 and BECN1 associating with additional regulatory/auxiliary subunits to form alternative complex forms. Alternative complex forms containing a fourth regulatory subunit in a mutually exclusive manner are PI3K complex I (PI3KC3-C1) containing ATG14, and PI3K complex II (PI3KC3-C2) containing UVRAG. PI3KC3-C1 displays a V-shaped architecture with PIK3R4 serving as a bridge between PIK3C3 and the ATG14:BECN1 subcomplex. Both, PI3KC3-C1 and PI3KC3-C2, can associate with further regulatory subunits, such as RUBCN, SH3GLB1/Bif-1 and AMBRA1. PI3KC3-C1 probably associates with PIK3CB. Forms a complex with PPP2CA and AMBRA1; AMBRA1 and BECN1 components of the complex regulate MYC stability via different pathways. Component of the complex, at least composed of LRPPRC, BECN1 and BCL2; the interactions prevent BECN1 from forming an autophagy-inducing complex with PIK3C3. Interacts with AMBRA1, GOPC, GRID2. Interacts with BCL2 and BCL2L1 isoform Bcl-X(L); the interaction inhibits BECN1 function in promoting autophagy by interfering with the formation of the PI3K complex. Interacts with cytosolic HMGB1; inhibits the interaction of BECN1 and BCL2 leading to promotion of autophagy. Interacts with USP10, USP13, DAPK1, RAB39A. Interacts with SLAMF1. Interacts with the poly-Gln domain of ATXN3; the interaction causes deubiquitination at Lys-400 and stabilizes BECN1. Interacts with VMP1. Interacts with TRIM5; the interaction causes activation of BECN1 by causing its dissociation from its inhibitors BCL2 and TAB2. Interacts with active ULK1 (phosphorylated on 'Ser-317') and MEFV simultaneously. Interacts with WDR81 and WDR91; negatively regulates the PI3 kinase/PI3K activity associated with endosomal membranes. Interacts with LAPTM4B; competes with EGFR for LAPTM4B binding; regulates EGFR activity. Interacts with TRIM50. Interacts with TRIM16. Interacts with ATG14; this interaction is increased in the absence of TMEM39A. Interacts with WASHC1; preventing interaction with AMBRA1 and the DCX(AMBRA1) complex and subsequent ubiquitination. Interacts with TRIM17. Interacts with BCL2L10/BCL-B (via BH1 domain). Interacts with SH3BGRL. Interacts with IRGM; enhancing BECN1-interacting partners and influencing the composition of the BECN1 complex. Interacts with ARMC3. Interacts with LRPPRC. Phosphorylation at Thr-117 by DAPK1 reduces its interaction with BCL2 and BCL2L1 and promotes induction of autophagy. In response to autophagic stimuli, phosphorylated at serine residues by AMPK in an ATG14-dependent manner, and this phosphorylation is critical for maximally efficient autophagy. Post-translationally, polyubiquitinated by NEDD4, both with 'Lys-11'- and 'Lys-63'-linkages. 'Lys-11'-linked polyubiquitination leads to degradation and is enhanced when the stabilizing interaction partner VPS34 is depleted. Deubiquitinated by USP10 and USP13, leading to stabilize the PIK3C3/VPS34-containing complexes. Polyubiquitinated at Lys-400 with 'Lys-48'-linkages. 'Lys-48'-linked polyubiquitination of Lys-400 leads to degradation. Deubiquitinated by ATXN3, leading to stabilization. Ubiquitinated at Lys-435 via 'Lys-63'-linkage by the DCX(AMBRA1) complex, thereby increasing the association between BECN1 and PIK3C3 to promote PIK3C3 activity. 'Lys-48'-linked ubiquitination by RNF216 leads to proteasomal degradation and autophagy inhibition. In terms of processing, proteolytically processed by caspases including CASP8 and CASP3; the C-terminal fragments lack autophagy-inducing capacity and are proposed to induce apoptosis. Thus the cleavage is proposed to be an determinant to switch from autophagy to apoptosis pathways affecting cellular homeostasis including viral infections and survival of tumor cells.

The protein resides in the cytoplasm. Its subcellular location is the golgi apparatus. It localises to the trans-Golgi network membrane. It is found in the endosome membrane. The protein localises to the endoplasmic reticulum membrane. The protein resides in the mitochondrion membrane. Its subcellular location is the cytoplasmic vesicle. It localises to the autophagosome. It is found in the mitochondrion. The protein localises to the nucleus. Functionally, plays a central role in autophagy. Acts as a core subunit of the PI3K complex that mediates formation of phosphatidylinositol 3-phosphate; different complex forms are believed to play a role in multiple membrane trafficking pathways: PI3KC3-C1 is involved in initiation of autophagosomes and PI3KC3-C2 in maturation of autophagosomes and endocytosis. Involved in regulation of degradative endocytic trafficking and required for the abscission step in cytokinesis, probably in the context of PI3KC3-C2. Essential for the formation of PI3KC3-C2 but not PI3KC3-C1 PI3K complex forms. Involved in endocytosis. May play a role in antiviral host defense. Its function is as follows. Beclin-1-C 35 kDa localized to mitochondria can promote apoptosis; it induces the mitochondrial translocation of BAX and the release of proapoptotic factors. This is Beclin-1 (Becn1) from Rattus norvegicus (Rat).